The following is a 120-amino-acid chain: NAD(P)H-quinone oxidoreductase subunit 3, chloroplastic (120 aa).

The next 3 membrane-spanning stretches (helical) occupy residues 9-29 (FFWA…LISG), 64-84 (MFAL…PWAM), and 88-108 (VLGV…IIGL).

Belongs to the complex I subunit 3 family. In terms of assembly, NDH is composed of at least 16 different subunits, 5 of which are encoded in the nucleus.

It is found in the plastid. Its subcellular location is the chloroplast thylakoid membrane. The enzyme catalyses a plastoquinone + NADH + (n+1) H(+)(in) = a plastoquinol + NAD(+) + n H(+)(out). It catalyses the reaction a plastoquinone + NADPH + (n+1) H(+)(in) = a plastoquinol + NADP(+) + n H(+)(out). Functionally, NDH shuttles electrons from NAD(P)H:plastoquinone, via FMN and iron-sulfur (Fe-S) centers, to quinones in the photosynthetic chain and possibly in a chloroplast respiratory chain. The immediate electron acceptor for the enzyme in this species is believed to be plastoquinone. Couples the redox reaction to proton translocation, and thus conserves the redox energy in a proton gradient. In Nicotiana tabacum (Common tobacco), this protein is NAD(P)H-quinone oxidoreductase subunit 3, chloroplastic.